A 267-amino-acid chain; its full sequence is Syntaxin-72 (267 aa).

Residues 1–244 (MPVIDIIFRV…QLVQMRSSRN (244 aa)) lie on the Cytoplasmic side of the membrane. Residues 53–87 (KAELASTEKNRAAAVAMNAEVRRTKARLAEDVVKL) adopt a coiled-coil conformation. A t-SNARE coiled-coil homology domain is found at 173-235 (EMRRKKQDEG…KNTNVRLKKQ (63 aa)). Residues 245-265 (FCIDIILLCVILGIVSYIYNA) traverse the membrane as a helical; Anchor for type IV membrane protein segment. Over 266-267 (LN) the chain is Vesicular.

It belongs to the syntaxin family. As to quaternary structure, part of the t-SNARE complex. In terms of tissue distribution, expressed in root, leaf, stem, flower and silique.

It is found in the membrane. Its function is as follows. Vesicle trafficking protein that functions in the secretory pathway. This chain is Syntaxin-72 (SYP72), found in Arabidopsis thaliana (Mouse-ear cress).